The sequence spans 964 residues: DNA polymerase (964 aa).

The protein belongs to the DNA polymerase type-B family.

It carries out the reaction DNA(n) + a 2'-deoxyribonucleoside 5'-triphosphate = DNA(n+1) + diphosphate. In terms of biological role, catalyzes DNA synthesis. The polypeptide is DNA polymerase (POL) (Choristoneura biennis entomopoxvirus (CbEPV)).